The primary structure comprises 202 residues: MKVSDRRKFEKANFDEFESALNNKNDLVHCPSITLFESIPTEVRSFYEDEKSGLIKVVKFRTGAMDRKRSFEKVVISVMVGKNVKKFLTFVEDEPDFQGGPIPSKYLVPKKINLMVYTLFQVHTLKFNRKDYDTLSLFYLNRGYYNELSFRVLERCHEIASARPNDSSTMRTFTDFVSGAPIVRSLQKSTIRKYGYNLAAYT.

Belongs to the helicase family. Yeast subtelomeric Y' repeat subfamily.

This is an uncharacterized protein from Saccharomyces cerevisiae (strain ATCC 204508 / S288c) (Baker's yeast).